The chain runs to 365 residues: Pheromone M-factor receptor (365 aa).

7 consecutive transmembrane segments (helical) span residues 7 to 24 (FYQF…PILY), 31 to 54 (NIPC…ESAI), 73 to 100 (ITSR…DTVI), 116 to 133 (VCLS…MVPL), 155 to 182 (YTLL…VVLY), 204 to 226 (FLRL…IFMV), and 265 to 283 (VPPT…SGGW).

This sequence belongs to the G-protein coupled receptor 4 family.

It localises to the membrane. Receptor for the peptide pheromone M-factor, a mating factor of S.pombe. Pheromone signaling is essential for initiation of meiosis in S.pombe; M-factor signaling alone may be sufficient. In Schizosaccharomyces pombe (strain 972 / ATCC 24843) (Fission yeast), this protein is Pheromone M-factor receptor (map3).